We begin with the raw amino-acid sequence, 350 residues long: Transmembrane protein 185A (350 aa).

Transmembrane regions (helical) follow at residues 16–36, 41–61, 81–101, 111–131, 177–197, 211–231, and 240–260; these read LIYACLLLFSVLLALRLDGII, WAVFAPIWLWKLMVIVGASVG, FKAMLIAVGIHLLLLMFEVLV, FWLLVFMPLFFVSPVSVAACV, ILMSFLCLVVLYYIVWSVLFL, ITMALSWMTIVVPLLTFEILL, and AFSCIPIFVPLWLSLITLMAT. The tract at residues 298-350 is mediates interaction with MAP1B; that stretch reads DLHHEDSEETEETPVPEPPKIAPMFRKKARVVITQSPGKYVLPPPKLNIEMPD.

It belongs to the TMEM185 family. As to quaternary structure, interacts with MAP1B. As to expression, broadly expressed in brain where it is specifically expressed by neurons (at protein level). Also detected in some cells of arterioles, intestine, lung and testis (at protein level).

The protein localises to the cell projection. Its subcellular location is the dendrite. It is found in the membrane. This is Transmembrane protein 185A (Tmem185a) from Mus musculus (Mouse).